Consider the following 607-residue polypeptide: Glucose-6-phosphate isomerase, glycosomal (607 aa).

Catalysis depends on E411, which acts as the Proton donor. Residues H442 and K571 contribute to the active site. Positions 605–607 (SHL) match the Microbody targeting signal motif.

Belongs to the GPI family. As to quaternary structure, homodimer.

Its subcellular location is the glycosome. The enzyme catalyses alpha-D-glucose 6-phosphate = beta-D-fructose 6-phosphate. Its pathway is carbohydrate degradation; glycolysis; D-glyceraldehyde 3-phosphate and glycerone phosphate from D-glucose: step 2/4. This Trypanosoma brucei brucei protein is Glucose-6-phosphate isomerase, glycosomal (PGI).